Reading from the N-terminus, the 496-residue chain is Glycerol kinase (496 aa).

T12 contributes to the ADP binding site. T12, T13, and S14 together coordinate ATP. T12 serves as a coordination point for sn-glycerol 3-phosphate. Residue R16 coordinates ADP. Sn-glycerol 3-phosphate contacts are provided by R82, E83, and Y134. R82, E83, and Y134 together coordinate glycerol. Residue H230 is modified to Phosphohistidine; by HPr. D244 is a binding site for sn-glycerol 3-phosphate. Residues D244 and Q245 each contribute to the glycerol site. 2 residues coordinate ADP: T266 and G309. 4 residues coordinate ATP: T266, G309, Q313, and G410. The ADP site is built by G410 and N414.

The protein belongs to the FGGY kinase family. As to quaternary structure, homotetramer and homodimer (in equilibrium). In terms of processing, the phosphoenolpyruvate-dependent sugar phosphotransferase system (PTS), including enzyme I, and histidine-containing protein (HPr) are required for the phosphorylation, which leads to the activation of the enzyme.

The enzyme catalyses glycerol + ATP = sn-glycerol 3-phosphate + ADP + H(+). The protein operates within polyol metabolism; glycerol degradation via glycerol kinase pathway; sn-glycerol 3-phosphate from glycerol: step 1/1. With respect to regulation, activated by phosphorylation and inhibited by fructose 1,6-bisphosphate (FBP). Key enzyme in the regulation of glycerol uptake and metabolism. Catalyzes the phosphorylation of glycerol to yield sn-glycerol 3-phosphate. The chain is Glycerol kinase from Bacillus cytotoxicus (strain DSM 22905 / CIP 110041 / 391-98 / NVH 391-98).